The chain runs to 87 residues: Small ribosomal subunit protein uS17 (87 aa).

Belongs to the universal ribosomal protein uS17 family. As to quaternary structure, part of the 30S ribosomal subunit.

One of the primary rRNA binding proteins, it binds specifically to the 5'-end of 16S ribosomal RNA. In Bacillus pumilus (strain SAFR-032), this protein is Small ribosomal subunit protein uS17.